Reading from the N-terminus, the 582-residue chain is Inactive metallocarboxypeptidase ECM14 (582 aa).

A signal peptide spans 1-20; it reads MHILQVITGATLVSVPFVSA. Positions 21–172 are excised as a propeptide; sequence IPSSTSEFLP…QAVYESYPQP (152 aa). The 323-residue stretch at 200–522 folds into the Peptidase M14 domain; it reads DYQPLSVIIP…NAVLVFGQFL (323 aa). 2 residues coordinate Zn(2+): His265 and Glu268. Residues 265–268, Arg323, and 340–341 contribute to the substrate site; these read HARE and DR. The cysteines at positions 334 and 357 are disulfide-linked. N-linked (GlcNAc...) asparagine glycosylation is found at Asn381 and Asn387. Position 397 (His397) interacts with Zn(2+). Substrate is bound at residue 398–399; that stretch reads SY. Acidic residues predominate over residues 561-571; that stretch reads SNQLEDDDNEN. The interval 561–582 is disordered; that stretch reads SNQLEDDDNENDTLLGFRTQKV. Asn571 is a glycosylation site (N-linked (GlcNAc...) asparagine).

It belongs to the peptidase M14 family. Zn(2+) is required as a cofactor.

It localises to the vacuole. Its subcellular location is the secreted. In terms of biological role, inactive carboxypeptidase that may play a role in cell wall organization and biogenesis. The polypeptide is Inactive metallocarboxypeptidase ECM14 (ECM14) (Coccidioides posadasii (strain C735) (Valley fever fungus)).